Consider the following 743-residue polypeptide: Threonine synthase-like 1 (743 aa).

Lys-281 carries the post-translational modification N6-acetyllysine. Residue Lys-351 is modified to N6-(pyridoxal phosphate)lysine.

The protein belongs to the threonine synthase family. Requires pyridoxal 5'-phosphate as cofactor.

In Pongo abelii (Sumatran orangutan), this protein is Threonine synthase-like 1 (THNSL1).